We begin with the raw amino-acid sequence, 81 residues long: Photosystem I iron-sulfur center (81 aa).

2 4Fe-4S ferredoxin-type domains span residues 2-31 (AHSV…MISW) and 39-68 (IASA…VRVY). Cys-11, Cys-14, Cys-17, Cys-21, Cys-48, Cys-51, Cys-54, and Cys-58 together coordinate [4Fe-4S] cluster.

As to quaternary structure, the eukaryotic PSI reaction center is composed of at least 11 subunits. It depends on [4Fe-4S] cluster as a cofactor.

The protein resides in the plastid. It localises to the chloroplast thylakoid membrane. The catalysed reaction is reduced [plastocyanin] + hnu + oxidized [2Fe-2S]-[ferredoxin] = oxidized [plastocyanin] + reduced [2Fe-2S]-[ferredoxin]. Functionally, apoprotein for the two 4Fe-4S centers FA and FB of photosystem I (PSI); essential for photochemical activity. FB is the terminal electron acceptor of PSI, donating electrons to ferredoxin. The C-terminus interacts with PsaA/B/D and helps assemble the protein into the PSI complex. Required for binding of PsaD and PsaE to PSI. PSI is a plastocyanin-ferredoxin oxidoreductase, converting photonic excitation into a charge separation, which transfers an electron from the donor P700 chlorophyll pair to the spectroscopically characterized acceptors A0, A1, FX, FA and FB in turn. The chain is Photosystem I iron-sulfur center (psaC) from Anthoceros angustus (Hornwort).